A 141-amino-acid polypeptide reads, in one-letter code: HTH-type transcriptional repressor NsrR (141 aa).

The region spanning 2–129 is the HTH rrf2-type domain; sequence QLTSFTDYGL…DNYTLADMVQ (128 aa). The H-T-H motif DNA-binding region spans 28-51; it reads ISQVTEVYGVSRNHMVKIINQLSR. C91, C96, and C102 together coordinate [2Fe-2S] cluster.

[2Fe-2S] cluster is required as a cofactor.

Functionally, nitric oxide-sensitive repressor of genes involved in protecting the cell against nitrosative stress. May require iron for activity. The protein is HTH-type transcriptional repressor NsrR of Yersinia enterocolitica serotype O:8 / biotype 1B (strain NCTC 13174 / 8081).